Here is a 306-residue protein sequence, read N- to C-terminus: Ribonuclease Z (306 aa).

Residues His63, His65, Asp67, His68, His140, Asp211, and His269 each coordinate Zn(2+). Asp67 (proton acceptor) is an active-site residue.

The protein belongs to the RNase Z family. In terms of assembly, homodimer. Zn(2+) is required as a cofactor.

The catalysed reaction is Endonucleolytic cleavage of RNA, removing extra 3' nucleotides from tRNA precursor, generating 3' termini of tRNAs. A 3'-hydroxy group is left at the tRNA terminus and a 5'-phosphoryl group is left at the trailer molecule.. Zinc phosphodiesterase, which displays some tRNA 3'-processing endonuclease activity. Probably involved in tRNA maturation, by removing a 3'-trailer from precursor tRNA. This chain is Ribonuclease Z, found in Listeria monocytogenes serotype 4b (strain CLIP80459).